The following is a 35-amino-acid chain: Photosystem II reaction center protein T (35 aa).

A helical membrane pass occupies residues 3-23 (ALVYTFLLVGTLGIIFFAIFF).

Belongs to the PsbT family. PSII is composed of 1 copy each of membrane proteins PsbA, PsbB, PsbC, PsbD, PsbE, PsbF, PsbH, PsbI, PsbJ, PsbK, PsbL, PsbM, PsbT, PsbY, PsbZ, Psb30/Ycf12, at least 3 peripheral proteins of the oxygen-evolving complex and a large number of cofactors. It forms dimeric complexes.

It localises to the plastid. The protein localises to the chloroplast thylakoid membrane. Functionally, found at the monomer-monomer interface of the photosystem II (PS II) dimer, plays a role in assembly and dimerization of PSII. PSII is a light-driven water plastoquinone oxidoreductase, using light energy to abstract electrons from H(2)O, generating a proton gradient subsequently used for ATP formation. This Zygnema circumcarinatum (Green alga) protein is Photosystem II reaction center protein T.